The chain runs to 184 residues: Ribosome maturation factor RimP (184 aa).

It belongs to the RimP family.

It is found in the cytoplasm. Required for maturation of 30S ribosomal subunits. The sequence is that of Ribosome maturation factor RimP from Zymomonas mobilis subsp. mobilis (strain ATCC 31821 / ZM4 / CP4).